Here is a 202-residue protein sequence, read N- to C-terminus: Nascent polypeptide-associated complex subunit alpha (202 aa).

Positions 1-19 are enriched in basic and acidic residues; sequence MADPRVEELPDEEVPKTNV. The interval 1–42 is disordered; the sequence is MADPRVEELPDEEVPKTNVEDAGSSSESEAGDEPTIPGGAAV. Residues 46–111 form the NAC-A/B domain; it reads SRNEKKARKA…AKIEDLNATA (66 aa). A compositionally biased stretch (low complexity) spans 117-126; the sequence is QQLAEAAANE. Residues 117–165 are disordered; that stretch reads QQLAEAAANEHAGHDHEHDHGKGKAPEAEAKKEEEEDDGEEVDESGLEA. Positions 127–149 are enriched in basic and acidic residues; that stretch reads HAGHDHEHDHGKGKAPEAEAKKE. Residues 150–162 show a composition bias toward acidic residues; it reads EEEDDGEEVDESG. One can recognise a UBA domain in the interval 163–202; it reads LEAKDIELVMAQANVSRKKAVKALRENDNDIVNSIMALSI.

This sequence belongs to the NAC-alpha family. As to quaternary structure, part of the nascent polypeptide-associated complex (NAC), consisting of egd2 and egd1. NAC associates with ribosomes via egd1.

Its subcellular location is the cytoplasm. The protein localises to the nucleus. Component of the nascent polypeptide-associated complex (NAC), a dynamic component of the ribosomal exit tunnel, protecting the emerging polypeptides from interaction with other cytoplasmic proteins to ensure appropriate nascent protein targeting. The NAC complex also promotes mitochondrial protein import by enhancing productive ribosome interactions with the outer mitochondrial membrane and blocks the inappropriate interaction of ribosomes translating non-secretory nascent polypeptides with translocation sites in the membrane of the endoplasmic reticulum. Egd2 may also be involved in transcription regulation. This is Nascent polypeptide-associated complex subunit alpha (egd2) from Aspergillus niger (strain ATCC MYA-4892 / CBS 513.88 / FGSC A1513).